The chain runs to 246 residues: Eukaryotic translation initiation factor 6 (246 aa).

Phosphoserine; by CK1 is present on residues S174 and S175.

The protein belongs to the eIF-6 family. As to quaternary structure, monomer. Associates with the 60S ribosomal subunit. In terms of processing, phosphorylation at Ser-174 and Ser-175 promotes nuclear export.

The protein resides in the cytoplasm. It localises to the nucleus. The protein localises to the nucleolus. Binds to the 60S ribosomal subunit and prevents its association with the 40S ribosomal subunit to form the 80S initiation complex in the cytoplasm. Is also involved in ribosome biogenesis. Associates with pre-60S subunits in the nucleus and is involved in its nuclear export. The polypeptide is Eukaryotic translation initiation factor 6 (Verticillium alfalfae (strain VaMs.102 / ATCC MYA-4576 / FGSC 10136) (Verticillium wilt of alfalfa)).